The following is a 360-amino-acid chain: 3-isopropylmalate dehydrogenase (360 aa).

Residue 76–89 (GPKWDTIERDIRPE) participates in NAD(+) binding. Substrate-binding residues include Arg96, Arg106, Arg134, and Asp224. Positions 224, 248, and 252 each coordinate Mg(2+). 282–294 (GSAPDIAGKGIAN) is an NAD(+) binding site.

This sequence belongs to the isocitrate and isopropylmalate dehydrogenases family. LeuB type 1 subfamily. As to quaternary structure, homodimer. Mg(2+) serves as cofactor. The cofactor is Mn(2+).

It is found in the cytoplasm. The enzyme catalyses (2R,3S)-3-isopropylmalate + NAD(+) = 4-methyl-2-oxopentanoate + CO2 + NADH. It functions in the pathway amino-acid biosynthesis; L-leucine biosynthesis; L-leucine from 3-methyl-2-oxobutanoate: step 3/4. Functionally, catalyzes the oxidation of 3-carboxy-2-hydroxy-4-methylpentanoate (3-isopropylmalate) to 3-carboxy-4-methyl-2-oxopentanoate. The product decarboxylates to 4-methyl-2 oxopentanoate. In Pseudomonas syringae pv. syringae (strain B728a), this protein is 3-isopropylmalate dehydrogenase.